The following is a 131-amino-acid chain: Protein Turandot M (131 aa).

The N-terminal stretch at 1–23 (MNPTIYLSCLMVFSVFLLGKVNA) is a signal peptide.

This sequence belongs to the Turandot family.

The protein resides in the secreted. In terms of biological role, a humoral factor that may play a role in stress tolerance. Requires Mekk1 expression in the fat body to regulate response to septic injury and consequent immune response. In Drosophila melanogaster (Fruit fly), this protein is Protein Turandot M.